Consider the following 131-residue polypeptide: MSLSDPIGDMIARIKNAQVRNHKKVALPSSNFKVKIADILKSEGFIKDYKIETENNKPTLSVDLKYYSGNPVISTFERVSKPGRRIFSSADSLPKINGGLGIAIVSTPKGVMTDIEARKQKVGGEIICKVF.

It belongs to the universal ribosomal protein uS8 family. In terms of assembly, part of the 30S ribosomal subunit. Contacts proteins S5 and S12.

Its function is as follows. One of the primary rRNA binding proteins, it binds directly to 16S rRNA central domain where it helps coordinate assembly of the platform of the 30S subunit. The protein is Small ribosomal subunit protein uS8 of Pelagibacter ubique (strain HTCC1062).